The sequence spans 592 residues: Bifunctional enzyme BirA/CoaX (592 aa).

The tract at residues 1–329 is biotin--protein ligase; sequence MTVLKLSHWR…ISLRSDDRPV (329 aa). In terms of domain architecture, BPL/LPL catalytic spans 83 to 259; sequence QTALKHECAS…ELDAVLLQYA (177 aa). The interval 336 to 592 is type III pantothenate kinase; it reads DSERFLLLDG…AAEGREYEHI (257 aa). ATP is bound at residue 344–351; that stretch reads DGGNSRLK. Substrate is bound by residues Y426 and 433–436; that span reads GSDR. The active-site Proton acceptor is the D435. Residue T458 participates in ATP binding. T508 serves as a coordination point for substrate.

It in the N-terminal section; belongs to the biotin--protein ligase family. In the C-terminal section; belongs to the type III pantothenate kinase family. Requires NH4(+) as cofactor. K(+) is required as a cofactor.

Its subcellular location is the cytoplasm. The enzyme catalyses biotin + L-lysyl-[protein] + ATP = N(6)-biotinyl-L-lysyl-[protein] + AMP + diphosphate + H(+). It carries out the reaction (R)-pantothenate + ATP = (R)-4'-phosphopantothenate + ADP + H(+). The protein operates within cofactor biosynthesis; coenzyme A biosynthesis; CoA from (R)-pantothenate: step 1/5. Its function is as follows. Activates biotin to form biotinyl-5'-adenylate and transfers the biotin moiety to biotin-accepting proteins. In terms of biological role, catalyzes the phosphorylation of pantothenate (Pan), the first step in CoA biosynthesis. This Neisseria meningitidis serogroup B (strain ATCC BAA-335 / MC58) protein is Bifunctional enzyme BirA/CoaX (birA/coaX).